The chain runs to 199 residues: Imidazoleglycerol-phosphate dehydratase (199 aa).

It belongs to the imidazoleglycerol-phosphate dehydratase family.

Its subcellular location is the cytoplasm. It catalyses the reaction D-erythro-1-(imidazol-4-yl)glycerol 3-phosphate = 3-(imidazol-4-yl)-2-oxopropyl phosphate + H2O. It functions in the pathway amino-acid biosynthesis; L-histidine biosynthesis; L-histidine from 5-phospho-alpha-D-ribose 1-diphosphate: step 6/9. This chain is Imidazoleglycerol-phosphate dehydratase, found in Rhodospirillum rubrum (strain ATCC 11170 / ATH 1.1.1 / DSM 467 / LMG 4362 / NCIMB 8255 / S1).